The following is a 311-amino-acid chain: Malate dehydrogenase (311 aa).

Residues 7–13 (GAAGGIG) and aspartate 34 contribute to the NAD(+) site. The substrate site is built by arginine 81 and arginine 87. Residues asparagine 94 and 117-119 (ITN) each bind NAD(+). The substrate site is built by asparagine 119 and arginine 153. The active-site Proton acceptor is histidine 177. Residue methionine 227 coordinates NAD(+).

It belongs to the LDH/MDH superfamily. MDH type 1 family. As to quaternary structure, homodimer.

It carries out the reaction (S)-malate + NAD(+) = oxaloacetate + NADH + H(+). Functionally, catalyzes the reversible oxidation of malate to oxaloacetate. In Shewanella woodyi (strain ATCC 51908 / MS32), this protein is Malate dehydrogenase.